The following is a 282-amino-acid chain: Probable methylxanthine N7-demethylase NdmC (282 aa).

The enzyme catalyses 7-methylxanthine + NADPH + O2 + H(+) = xanthine + formaldehyde + NADP(+) + H2O. It carries out the reaction 7-methylxanthine + NADH + O2 + H(+) = xanthine + formaldehyde + NAD(+) + H2O. Functionally, involved in the caffeine degradation, which is the essential first step for assimilating the carbon and nitrogen in caffeine. Probably catalyzes the N7-demethylation of 7-methylxanthine to produce xanthine and formaldehyde. The sequence is that of Probable methylxanthine N7-demethylase NdmC from Pseudomonas sp. (strain TJI-51).